Here is a 467-residue protein sequence, read N- to C-terminus: Glutamate--tRNA ligase (467 aa).

Positions 10-20 match the 'HIGH' region motif; sequence PSPTGHLHIGG. Zn(2+)-binding residues include Cys-99, Cys-101, Cys-126, and Glu-128. The 'KMSKS' region signature appears at 236 to 240; sequence RLSKR. Residue Lys-239 participates in ATP binding.

It belongs to the class-I aminoacyl-tRNA synthetase family. Glutamate--tRNA ligase type 1 subfamily. In terms of assembly, monomer. Requires Zn(2+) as cofactor.

It localises to the cytoplasm. The enzyme catalyses tRNA(Glu) + L-glutamate + ATP = L-glutamyl-tRNA(Glu) + AMP + diphosphate. In terms of biological role, catalyzes the attachment of glutamate to tRNA(Glu) in a two-step reaction: glutamate is first activated by ATP to form Glu-AMP and then transferred to the acceptor end of tRNA(Glu). The polypeptide is Glutamate--tRNA ligase (Desulfosudis oleivorans (strain DSM 6200 / JCM 39069 / Hxd3) (Desulfococcus oleovorans)).